A 460-amino-acid chain; its full sequence is MSLANRIEEIRCLCQYKLWNDLPSYGEDENVPQNIRRCYQLLDMTSRSFAVVIKELPNGIREAVMIFYLVLRGLDTVEDDMTLPLDKKLPILRDFYKTIEVEGWTFNESGPNEKDRQLLVEFDVVIKEYLNLSEGYRNVISNITKEMGDGMAYYASLAEKNDGFSVETIEDFNKYCHYVAGLVGIGLSRLFAQSKLEDPDLAHSQAISNSLGLFLQKVNIIRDYREDFDDNRHFWPREIWSKYTSSFGDLCLPDNSEKALECLSDMTANALTHATDALVYLSQLKTQEIFNFCAIPQVMAIATLAAVFRNPDVFQTNVKIRKGQAVQIILHSVNLKNVCDLFLRYTRDIHYKNTPKDPNFLKISIECGKIEQVSESLFPRRFREMYEKAYVSKLSEQKKGNGTQKAILNDEQKELYRKDLQKLGISILFVFFIILVCLAVIFYVFNIRIHWSDFKELNLF.

A helical transmembrane segment spans residues 425–445 (ISILFVFFIILVCLAVIFYVF).

It belongs to the phytoene/squalene synthase family. Interacts with pof14. The cofactor is Mg(2+).

The protein resides in the endoplasmic reticulum membrane. It carries out the reaction 2 (2E,6E)-farnesyl diphosphate + NADPH + H(+) = squalene + 2 diphosphate + NADP(+). The catalysed reaction is 2 (2E,6E)-farnesyl diphosphate + NADH + H(+) = squalene + 2 diphosphate + NAD(+). Its pathway is terpene metabolism; lanosterol biosynthesis; lanosterol from farnesyl diphosphate: step 1/3. It functions in the pathway steroid metabolism; ergosterol biosynthesis. Squalene synthase; part of the third module of ergosterol biosynthesis pathway that includes by the late steps of the pathway. Erg9 produces squalene from 2 farnesyl pyrophosphate moieties. The third module or late pathway involves the ergosterol synthesis itself through consecutive reactions that mainly occur in the endoplasmic reticulum (ER) membrane. Firstly, the squalene synthase erg9 catalyzes the condensation of 2 farnesyl pyrophosphate moieties to form squalene, which is the precursor of all steroids. Secondly, squalene is converted into lanosterol by the consecutive action of the squalene epoxidase erg1 and the lanosterol synthase erg7. The lanosterol 14-alpha-demethylase erg11/cyp1 catalyzes C14-demethylation of lanosterol to produce 4,4'-dimethyl cholesta-8,14,24-triene-3-beta-ol. In the next steps, a complex process involving various demethylation, reduction and desaturation reactions catalyzed by the C-14 reductase erg24 and the C-4 demethylation complex erg25-erg26-erg27 leads to the production of zymosterol. Erg28 likely functions in the C-4 demethylation complex reaction by tethering erg26 and Erg27 to the endoplasmic reticulum or to facilitate interaction between these proteins. Then, the sterol 24-C-methyltransferase erg6 catalyzes the methyl transfer from S-adenosyl-methionine to the C-24 of zymosterol to form fecosterol. The C-8 sterol isomerase erg2 catalyzes the reaction which results in unsaturation at C-7 in the B ring of sterols and thus converts fecosterol to episterol. The sterol-C5-desaturases erg31 and erg32 then catalyze the introduction of a C-5 double bond in the B ring to produce 5-dehydroepisterol. The C-22 sterol desaturase erg5 further converts 5-dehydroepisterol into ergosta-5,7,22,24(28)-tetraen-3beta-ol by forming the C-22(23) double bond in the sterol side chain. Finally, ergosta-5,7,22,24(28)-tetraen-3beta-ol is substrate of the C-24(28) sterol reductase erg4 to produce ergosterol. In the genus Schizosaccharomyces, a second route exists between lanosterol and fecosterol, via the methylation of lanosterol to eburicol by erg6, followed by C14-demethylation by erg11/cyp1 and C4-demethylation by the demethylation complex erg25-erg26-erg27. This Schizosaccharomyces pombe (strain 972 / ATCC 24843) (Fission yeast) protein is Squalene synthase.